The chain runs to 311 residues: Olfactory receptor 1N1 (311 aa).

The Extracellular segment spans residues 1 to 23 (MENQSSISEFFLRGISAPPEQQQ). Asn-3 carries N-linked (GlcNAc...) asparagine glycosylation. A helical membrane pass occupies residues 24–47 (SLFGIFLCMYLVTLTGNLLIILAI). At 48–55 (GSDLHLHT) the chain is on the cytoplasmic side. The helical transmembrane segment at 56–77 (PMYFFLANLSFVDMGLTSSTVT) threads the bilayer. The Extracellular segment spans residues 78–98 (KMLVNIQTRHHTISYTGCLTQ). An intrachain disulfide couples Cys-95 to Cys-187. A helical transmembrane segment spans residues 99–118 (MYFFLMFGDLDSFFLAAMAY). At 119 to 137 (DRYVAICHPLCYSTVMRPQ) the chain is on the cytoplasmic side. Residues 138 to 156 (VCALMLALCWVLTNIVALT) traverse the membrane as a helical segment. Topologically, residues 157 to 194 (HTFLMARLSFCVTGEIAHFFCDITPVLKLSCSDTHINE) are extracellular. A helical transmembrane segment spans residues 195-217 (MMVFVLGGTVLIVPFLCIVTSYI). The Cytoplasmic portion of the chain corresponds to 218–234 (HIVPAILRVRTRGGVGK). A helical membrane pass occupies residues 235 to 257 (AFSTCSSHLCVVCVFYGTLFSAY). Over 258 to 270 (LCPPSIASEEKDI) the chain is Extracellular. The chain crosses the membrane as a helical span at residues 271–290 (AAAAMYTIVTPMLNPFIYSL). The Cytoplasmic segment spans residues 291 to 311 (RNKDMKGALKRLFSHRSIVSS).

It belongs to the G-protein coupled receptor 1 family.

Its subcellular location is the cell membrane. Functionally, odorant receptor. In Homo sapiens (Human), this protein is Olfactory receptor 1N1 (OR1N1).